Here is a 175-residue protein sequence, read N- to C-terminus: Large ribosomal subunit protein bL17 (175 aa).

Positions 127 to 175 (GEAEAATKRAVKEDALKKDEAPAAESVEDAKPAEDAPAAEAADDKGKDA) are disordered. A compositionally biased stretch (basic and acidic residues) spans 131 to 147 (AATKRAVKEDALKKDEA).

Belongs to the bacterial ribosomal protein bL17 family. As to quaternary structure, part of the 50S ribosomal subunit. Contacts protein L32.

The polypeptide is Large ribosomal subunit protein bL17 (Streptomyces griseus subsp. griseus (strain JCM 4626 / CBS 651.72 / NBRC 13350 / KCC S-0626 / ISP 5235)).